Reading from the N-terminus, the 242-residue chain is uncharacterized protein (242 aa).

This is an uncharacterized protein from Haemophilus influenzae (strain ATCC 51907 / DSM 11121 / KW20 / Rd).